Here is a 229-residue protein sequence, read N- to C-terminus: Potassium/proton antiporter CemA (229 aa).

The next 4 membrane-spanning stretches (helical) occupy residues 11–31, 118–138, 158–178, and 190–210; these read TTPF…SLFF, IISF…LVIL, LLAL…ELLI, and LLVC…TFNY.

This sequence belongs to the CemA family.

The protein resides in the plastid. It localises to the chloroplast inner membrane. The catalysed reaction is K(+)(in) + H(+)(out) = K(+)(out) + H(+)(in). Functionally, contributes to K(+)/H(+) antiport activity by supporting proton efflux to control proton extrusion and homeostasis in chloroplasts in a light-dependent manner to modulate photosynthesis. Prevents excessive induction of non-photochemical quenching (NPQ) under continuous-light conditions. Indirectly promotes efficient inorganic carbon uptake into chloroplasts. In Pelargonium hortorum (Common geranium), this protein is Potassium/proton antiporter CemA.